The primary structure comprises 328 residues: DNA-directed RNA polymerase subunit alpha (328 aa).

An alpha N-terminal domain (alpha-NTD) region spans residues 1-232 (MSTQGFLKPR…DQISVFAALE (232 aa)). The alpha C-terminal domain (alpha-CTD) stretch occupies residues 248 to 328 (IDPVLLRPVD…NWPPLGLERP (81 aa)).

It belongs to the RNA polymerase alpha chain family. As to quaternary structure, homodimer. The RNAP catalytic core consists of 2 alpha, 1 beta, 1 beta' and 1 omega subunit. When a sigma factor is associated with the core the holoenzyme is formed, which can initiate transcription.

It catalyses the reaction RNA(n) + a ribonucleoside 5'-triphosphate = RNA(n+1) + diphosphate. In terms of biological role, DNA-dependent RNA polymerase catalyzes the transcription of DNA into RNA using the four ribonucleoside triphosphates as substrates. The chain is DNA-directed RNA polymerase subunit alpha from Bordetella petrii (strain ATCC BAA-461 / DSM 12804 / CCUG 43448).